Reading from the N-terminus, the 679-residue chain is Methionine--tRNA ligase (679 aa).

The short motif at 14 to 24 is the 'HIGH' region element; the sequence is PYANGSIHLGH. Residues C145, C148, C158, and C161 each coordinate Zn(2+). Positions 331 to 335 match the 'KMSKS' region motif; the sequence is KMSKS. K334 serves as a coordination point for ATP. Positions 577–679 constitute a tRNA-binding domain; that stretch reads TFAAVDLRVA…SGAKPGQRIK (103 aa).

This sequence belongs to the class-I aminoacyl-tRNA synthetase family. MetG type 1 subfamily. In terms of assembly, homodimer. The cofactor is Zn(2+).

It is found in the cytoplasm. It carries out the reaction tRNA(Met) + L-methionine + ATP = L-methionyl-tRNA(Met) + AMP + diphosphate. Is required not only for elongation of protein synthesis but also for the initiation of all mRNA translation through initiator tRNA(fMet) aminoacylation. In Pseudomonas putida (strain ATCC 700007 / DSM 6899 / JCM 31910 / BCRC 17059 / LMG 24140 / F1), this protein is Methionine--tRNA ligase.